The chain runs to 162 residues: uncharacterized protein (162 aa).

A helical transmembrane segment spans residues 5 to 25 (IIILFLFTAILCSITLCGCIS).

It localises to the membrane. This is an uncharacterized protein from Methanocaldococcus jannaschii (strain ATCC 43067 / DSM 2661 / JAL-1 / JCM 10045 / NBRC 100440) (Methanococcus jannaschii).